The chain runs to 139 residues: Peptide methionine sulfoxide reductase MsrB (139 aa).

The MsrB domain occupies 17 to 139 (EEQWRRELSP…NSAALKLEPK (123 aa)). Zn(2+) contacts are provided by cysteine 56, cysteine 59, cysteine 105, and cysteine 108. Residue cysteine 128 is the Nucleophile of the active site.

Belongs to the MsrB Met sulfoxide reductase family. It depends on Zn(2+) as a cofactor.

The catalysed reaction is L-methionyl-[protein] + [thioredoxin]-disulfide + H2O = L-methionyl-(R)-S-oxide-[protein] + [thioredoxin]-dithiol. In Bradyrhizobium diazoefficiens (strain JCM 10833 / BCRC 13528 / IAM 13628 / NBRC 14792 / USDA 110), this protein is Peptide methionine sulfoxide reductase MsrB.